The primary structure comprises 438 residues: uncharacterized protein (438 aa).

Residues 23-193 (IHAKPPVVVV…VNATIRLTAA (171 aa)) enclose the FAD-binding PCMH-type domain. Residues 55 to 59 (VRGSG), 60 to 61 (HS), Gln65, Asp117, Thr122, 128 to 132 (SVGGF), Ile183, Tyr393, and 430 to 433 (APGY) contribute to the FAD site. At His60 the chain carries Pros-8alpha-FAD histidine.

The protein belongs to the oxygen-dependent FAD-linked oxidoreductase family. It depends on FAD as a cofactor.

Functionally, the FAS-operon encodes genes involved in cytokinin production and in host plant fasciation (leafy gall). This is an uncharacterized protein from Rhodococcoides fascians (Rhodococcus fascians).